We begin with the raw amino-acid sequence, 805 residues long: Phenylalanine--tRNA ligase beta subunit (805 aa).

In terms of domain architecture, tRNA-binding spans 39–148 (APPFTGVVVA…AALRPGTDIR (110 aa)). The B5 domain occupies 399-474 (PVREPVRMRL…RVYGFERIPD (76 aa)). Mg(2+) is bound by residues D452, D458, E461, and E462. One can recognise an FDX-ACB domain in the interval 703–804 (SRQPAVVRDL…LVAAHNARQR (102 aa)).

The protein belongs to the phenylalanyl-tRNA synthetase beta subunit family. Type 1 subfamily. In terms of assembly, tetramer of two alpha and two beta subunits. It depends on Mg(2+) as a cofactor.

Its subcellular location is the cytoplasm. The catalysed reaction is tRNA(Phe) + L-phenylalanine + ATP = L-phenylalanyl-tRNA(Phe) + AMP + diphosphate + H(+). This Bordetella parapertussis (strain 12822 / ATCC BAA-587 / NCTC 13253) protein is Phenylalanine--tRNA ligase beta subunit.